A 119-amino-acid chain; its full sequence is RKLAFRYRRVREIYDKYKTNVGGLLSPQKREALQRLRTDIEVLTDSWLETALKSLLLIQSRKNCVNILITTTQLVPALAKVLLYGLGEVFPIENIYSATKIGKESCFERIVSRFGKKVT.

It belongs to the HAD-like hydrolase superfamily. EYA family. Requires Mg(2+) as cofactor.

The protein localises to the cytoplasm. It localises to the nucleus. The enzyme catalyses O-phospho-L-tyrosyl-[protein] + H2O = L-tyrosyl-[protein] + phosphate. Tyrosine phosphatase that specifically dephosphorylates 'Tyr-142' of histone H2AX (H2AXY142ph). 'Tyr-142' phosphorylation of histone H2AX plays a central role in DNA repair and acts as a mark that distinguishes between apoptotic and repair responses to genotoxic stress. Promotes efficient DNA repair by dephosphorylating H2AX, promoting the recruitment of DNA repair complexes containing MDC1. Its function as histone phosphatase probably explains its role in transcription regulation during organogenesis. May be involved in development of the eye. The protein is Protein phosphatase EYA3 (EYA3) of Gallus gallus (Chicken).